A 238-amino-acid chain; its full sequence is tRNA (guanine-N(7)-)-methyltransferase (238 aa).

S-adenosyl-L-methionine-binding residues include glutamate 68, glutamate 93, aspartate 120, and aspartate 143. Aspartate 143 is an active-site residue. Residues lysine 147, aspartate 179, and 216 to 219 (TKFE) each bind substrate.

It belongs to the class I-like SAM-binding methyltransferase superfamily. TrmB family.

The enzyme catalyses guanosine(46) in tRNA + S-adenosyl-L-methionine = N(7)-methylguanosine(46) in tRNA + S-adenosyl-L-homocysteine. Its pathway is tRNA modification; N(7)-methylguanine-tRNA biosynthesis. Catalyzes the formation of N(7)-methylguanine at position 46 (m7G46) in tRNA. The protein is tRNA (guanine-N(7)-)-methyltransferase of Shewanella sp. (strain W3-18-1).